The sequence spans 391 residues: MSKAIKLPQKLMLLGSGELGKEFVIAAQRLGNYVIAVDRYANAPAMQVADFCEVISMLSADDLEAVVTKYQPDFIIPEIEAIRTEKLQEFEDRGITVIPTAAATNYTMNRDRIRELAHEELGIRTAKYGYAITLEELIAVSDEIGFPNVVKPVMSSSGKGQSVVATKEEVEKAWNYAIANSRGDSQKVIVEEFINFEIEITLLTIKQWDSPTIFCSPIGHRQERGDYQESWQPAGISEDKILEAQAIAKKVTDALGGAGIFGVEFFITKDEVIFSELSPRPHDTGMVTLISQNLNEFELHLRAILGLPIPKIEQLGPSASAVILASEKLDAPVFTGIAEALAAPDVDIRLFGKPTAHPYRRMGVALAKAENVQAAREKATDAASKIQISSQ.

N(1)-(5-phospho-beta-D-ribosyl)glycinamide-binding positions include 18 to 19 (EL) and Glu78. ATP-binding positions include Arg110, Lys151, 156-161 (SSGKGQ), 191-194 (EEFI), and Glu199. Residues 115–305 (ELAHEELGIR…EFELHLRAIL (191 aa)) enclose the ATP-grasp domain. 2 residues coordinate Mg(2+): Glu264 and Glu276. N(1)-(5-phospho-beta-D-ribosyl)glycinamide-binding positions include Asp283, Lys353, and 360 to 361 (RR).

It belongs to the PurK/PurT family. As to quaternary structure, homodimer.

The catalysed reaction is N(1)-(5-phospho-beta-D-ribosyl)glycinamide + formate + ATP = N(2)-formyl-N(1)-(5-phospho-beta-D-ribosyl)glycinamide + ADP + phosphate + H(+). Its pathway is purine metabolism; IMP biosynthesis via de novo pathway; N(2)-formyl-N(1)-(5-phospho-D-ribosyl)glycinamide from N(1)-(5-phospho-D-ribosyl)glycinamide (formate route): step 1/1. Its function is as follows. Involved in the de novo purine biosynthesis. Catalyzes the transfer of formate to 5-phospho-ribosyl-glycinamide (GAR), producing 5-phospho-ribosyl-N-formylglycinamide (FGAR). Formate is provided by PurU via hydrolysis of 10-formyl-tetrahydrofolate. The polypeptide is Formate-dependent phosphoribosylglycinamide formyltransferase (Trichormus variabilis (strain ATCC 29413 / PCC 7937) (Anabaena variabilis)).